A 789-amino-acid chain; its full sequence is Phenylalanine--tRNA ligase beta subunit (789 aa).

The tRNA-binding domain occupies 39-149; that stretch reads ADGLEAFRIA…HEAPVGQSYV (111 aa). Positions 399 to 471 constitute a B5 domain; it reads SAVPVISYDP…RIEGLDNVPS (73 aa). Residues Asp449, Asp455, and Asp459 each coordinate Mg(2+). The region spanning 696–788 is the FDX-ACB domain; that stretch reads SMLQPVFRDF…AAAKKGARLR (93 aa).

Belongs to the phenylalanyl-tRNA synthetase beta subunit family. Type 1 subfamily. Tetramer of two alpha and two beta subunits. Mg(2+) is required as a cofactor.

It is found in the cytoplasm. The catalysed reaction is tRNA(Phe) + L-phenylalanine + ATP = L-phenylalanyl-tRNA(Phe) + AMP + diphosphate + H(+). The protein is Phenylalanine--tRNA ligase beta subunit of Zymomonas mobilis subsp. mobilis (strain ATCC 31821 / ZM4 / CP4).